A 359-amino-acid chain; its full sequence is Cysteine/Cysteine sulfinic acid decarboxylase (359 aa).

The protein in the N-terminal section; belongs to the HFCD (homo-oligomeric flavin containing Cys decarboxylase) superfamily. In the C-terminal section; belongs to the PPC synthetase family.

The catalysed reaction is L-cysteine + H(+) = cysteamine + CO2. The enzyme catalyses 3-sulfino-L-alanine + H(+) = hypotaurine + CO2. With respect to regulation, slightly stimulated in the presence of 1 mM Mg(2+). Catalyzes the decarboxylation of L-cysteine to cysteamine and of 3-sulfino-L-alanine (cysteine sulfinic acid) to hypotaurine. Also catalyzes the decarboxylation of various amino acids such as L-lysine, L-glutamate, L-asparaginate and L-proline. In vitro, shows highest activity with L-cysteine as substrate. This Unknown prokaryotic organism protein is Cysteine/Cysteine sulfinic acid decarboxylase.